A 532-amino-acid polypeptide reads, in one-letter code: FAD-dependent monooxygenase hkm7 (532 aa).

FAD-binding positions include 191-193 and aspartate 261; that span reads RIY.

The protein belongs to the PheA/TfdB FAD monooxygenase family.

Its pathway is secondary metabolite biosynthesis. In terms of biological role, FAD-dependent monooxygenase; part of the gene cluster that mediates the biosynthesis of hancockiamides, an unusual new family of N-cinnamoylated piperazines. The NRPS hkm10 and the NmrA-like reductase hkm9 are proposed to convert two molecules of L-Phe to the intermediary piperazine called xenocockiamide A. Xenocockiamide A is then converted to hancockiamide D via a series of hydroxylations and O-methylations. The tyrosinase hkm6 may catalyze an aromatic hydroxylation, then the 2-oxoglutarate-dependent Fe(II) dioxygenase hkm4 and the FAD-dependent phenol hydroxylase hkm7 may catalyze consecutive hydroxylations to install 2 more hydroxy groups, and the methyltransferase hkm8 probably catalyzes two methylations using 2 molecules of S-adenosyl-L-methionine (SAM). The NRPS hkm11 activates and transfers trans-cinnamate supplied by the PAL hkm12 to hancockiamide D and produces hancockiamide A. NRPS Hkm11 has the flexibility to tolerate the bulky hancockiamide G as a substrate and the absence of the acetyl-transferase hkm3 opens up the opportunity for hkm11 to introduce a second N-cinnamoyl moiety. The cytochrome P450 monooxygenase hkm5 catalyzes the methylenedioxy bridge formation, converting hancockiamide A into hancockiamide G. Hkm5 can also convert hancockiamide B into hancockiamide C, and hancockiamide D into hancockiamide H. The N-acetyltransferase hkm3 finally transfers an acetyl group to 1-N of piperazine, converting hancockiamide A into hancockiamide B and hancockiamide G into hancockiamide C. This Aspergillus hancockii protein is FAD-dependent monooxygenase hkm7.